A 434-amino-acid chain; its full sequence is Trigger factor (434 aa).

One can recognise a PPIase FKBP-type domain in the interval Glu-161–Pro-246.

The protein belongs to the FKBP-type PPIase family. Tig subfamily.

The protein resides in the cytoplasm. It catalyses the reaction [protein]-peptidylproline (omega=180) = [protein]-peptidylproline (omega=0). In terms of biological role, involved in protein export. Acts as a chaperone by maintaining the newly synthesized protein in an open conformation. Functions as a peptidyl-prolyl cis-trans isomerase. This is Trigger factor from Sodalis glossinidius (strain morsitans).